Consider the following 271-residue polypeptide: Formamidopyrimidine-DNA glycosylase (271 aa).

Catalysis depends on Pro-2, which acts as the Schiff-base intermediate with DNA. Glu-3 acts as the Proton donor in catalysis. Residue Lys-58 is the Proton donor; for beta-elimination activity of the active site. Positions 92, 111, and 152 each coordinate DNA. The FPG-type zinc finger occupies 237–271 (MVYGREGQACKHCGRELKHATIGQRATVWCAACQR). Arg-261 functions as the Proton donor; for delta-elimination activity in the catalytic mechanism.

This sequence belongs to the FPG family. In terms of assembly, monomer. Zn(2+) is required as a cofactor.

It carries out the reaction Hydrolysis of DNA containing ring-opened 7-methylguanine residues, releasing 2,6-diamino-4-hydroxy-5-(N-methyl)formamidopyrimidine.. It catalyses the reaction 2'-deoxyribonucleotide-(2'-deoxyribose 5'-phosphate)-2'-deoxyribonucleotide-DNA = a 3'-end 2'-deoxyribonucleotide-(2,3-dehydro-2,3-deoxyribose 5'-phosphate)-DNA + a 5'-end 5'-phospho-2'-deoxyribonucleoside-DNA + H(+). Involved in base excision repair of DNA damaged by oxidation or by mutagenic agents. Acts as a DNA glycosylase that recognizes and removes damaged bases. Has a preference for oxidized purines, such as 7,8-dihydro-8-oxoguanine (8-oxoG). Has AP (apurinic/apyrimidinic) lyase activity and introduces nicks in the DNA strand. Cleaves the DNA backbone by beta-delta elimination to generate a single-strand break at the site of the removed base with both 3'- and 5'-phosphates. The polypeptide is Formamidopyrimidine-DNA glycosylase (Xanthomonas campestris pv. campestris (strain B100)).